A 197-amino-acid polypeptide reads, in one-letter code: Recombination protein RecR (197 aa).

The C4-type zinc finger occupies 57–72 (CSVCFGITEEDPCRLC). The 96-residue stretch at 79–174 (TSLCVVEEPQ…RVTRLAHGIP (96 aa)) folds into the Toprim domain.

The protein belongs to the RecR family.

Functionally, may play a role in DNA repair. It seems to be involved in an RecBC-independent recombinational process of DNA repair. It may act with RecF and RecO. This is Recombination protein RecR from Geobacter metallireducens (strain ATCC 53774 / DSM 7210 / GS-15).